A 309-amino-acid chain; its full sequence is Ribonuclease Z (309 aa).

Residues His-63, His-65, Asp-67, His-68, His-141, Asp-212, and His-270 each contribute to the Zn(2+) site. The active-site Proton acceptor is the Asp-67.

It belongs to the RNase Z family. Homodimer. It depends on Zn(2+) as a cofactor.

The enzyme catalyses Endonucleolytic cleavage of RNA, removing extra 3' nucleotides from tRNA precursor, generating 3' termini of tRNAs. A 3'-hydroxy group is left at the tRNA terminus and a 5'-phosphoryl group is left at the trailer molecule.. Functionally, zinc phosphodiesterase, which displays some tRNA 3'-processing endonuclease activity. Probably involved in tRNA maturation, by removing a 3'-trailer from precursor tRNA. This chain is Ribonuclease Z, found in Lactobacillus delbrueckii subsp. bulgaricus (strain ATCC 11842 / DSM 20081 / BCRC 10696 / JCM 1002 / NBRC 13953 / NCIMB 11778 / NCTC 12712 / WDCM 00102 / Lb 14).